A 662-amino-acid chain; its full sequence is UvrABC system protein B (662 aa).

A Helicase ATP-binding domain is found at Lys-25–Arg-182. Residue Gly-38–Thr-45 coordinates ATP. Residues Tyr-91–Ile-114 carry the Beta-hairpin motif. In terms of domain architecture, Helicase C-terminal spans Gln-429–Ile-595. The UVR domain occupies Asp-622–Asp-657.

It belongs to the UvrB family. As to quaternary structure, forms a heterotetramer with UvrA during the search for lesions. Interacts with UvrC in an incision complex.

The protein resides in the cytoplasm. The UvrABC repair system catalyzes the recognition and processing of DNA lesions. A damage recognition complex composed of 2 UvrA and 2 UvrB subunits scans DNA for abnormalities. Upon binding of the UvrA(2)B(2) complex to a putative damaged site, the DNA wraps around one UvrB monomer. DNA wrap is dependent on ATP binding by UvrB and probably causes local melting of the DNA helix, facilitating insertion of UvrB beta-hairpin between the DNA strands. Then UvrB probes one DNA strand for the presence of a lesion. If a lesion is found the UvrA subunits dissociate and the UvrB-DNA preincision complex is formed. This complex is subsequently bound by UvrC and the second UvrB is released. If no lesion is found, the DNA wraps around the other UvrB subunit that will check the other stand for damage. This chain is UvrABC system protein B, found in Clostridium botulinum (strain Langeland / NCTC 10281 / Type F).